The following is a 102-amino-acid chain: Large ribosomal subunit protein bL21 (102 aa).

Belongs to the bacterial ribosomal protein bL21 family. As to quaternary structure, part of the 50S ribosomal subunit. Contacts protein L20.

This protein binds to 23S rRNA in the presence of protein L20. The polypeptide is Large ribosomal subunit protein bL21 (Geobacillus thermodenitrificans (strain NG80-2)).